The primary structure comprises 426 residues: Serine--tRNA ligase (426 aa).

Position 233–235 (233–235 (TAE)) interacts with L-serine. 264–266 (RSE) contributes to the ATP binding site. E287 serves as a coordination point for L-serine. ATP is bound at residue 351 to 354 (EISS). S387 contributes to the L-serine binding site.

It belongs to the class-II aminoacyl-tRNA synthetase family. Type-1 seryl-tRNA synthetase subfamily. Homodimer. The tRNA molecule binds across the dimer.

The protein localises to the cytoplasm. It catalyses the reaction tRNA(Ser) + L-serine + ATP = L-seryl-tRNA(Ser) + AMP + diphosphate + H(+). It carries out the reaction tRNA(Sec) + L-serine + ATP = L-seryl-tRNA(Sec) + AMP + diphosphate + H(+). It functions in the pathway aminoacyl-tRNA biosynthesis; selenocysteinyl-tRNA(Sec) biosynthesis; L-seryl-tRNA(Sec) from L-serine and tRNA(Sec): step 1/1. Functionally, catalyzes the attachment of serine to tRNA(Ser). Is also able to aminoacylate tRNA(Sec) with serine, to form the misacylated tRNA L-seryl-tRNA(Sec), which will be further converted into selenocysteinyl-tRNA(Sec). The protein is Serine--tRNA ligase of Francisella philomiragia subsp. philomiragia (strain ATCC 25017 / CCUG 19701 / FSC 153 / O#319-036).